The chain runs to 43 residues: Protein PsbN (43 aa).

A helical membrane pass occupies residues 7–27; it reads LSIGIAVVVIAVTGFSIYTAF.

It belongs to the PsbN family.

It is found in the cellular thylakoid membrane. Its function is as follows. May play a role in photosystem I and II biogenesis. This chain is Protein PsbN, found in Picosynechococcus sp. (strain ATCC 27264 / PCC 7002 / PR-6) (Agmenellum quadruplicatum).